A 114-amino-acid polypeptide reads, in one-letter code: uncharacterized protein (114 aa).

This is an uncharacterized protein from Saccharomyces cerevisiae (strain ATCC 204508 / S288c) (Baker's yeast).